We begin with the raw amino-acid sequence, 204 residues long: Large ribosomal subunit protein eL15 (204 aa).

Belongs to the eukaryotic ribosomal protein eL15 family. In terms of assembly, component of the large ribosomal subunit.

It localises to the cytoplasm. Component of the large ribosomal subunit. The ribosome is a large ribonucleoprotein complex responsible for the synthesis of proteins in the cell. The polypeptide is Large ribosomal subunit protein eL15 (rpl15) (Megalobrama amblycephala (Chinese blunt snout bream)).